Here is a 489-residue protein sequence, read N- to C-terminus: UBX domain-containing protein 7 (489 aa).

The residue at position 2 (alanine 2) is an N-acetylalanine. In terms of domain architecture, UBA spans 2–54; the sequence is AAHGGSAASSALKGLIQQFTTITGASESVGKHMLEACNNNLEMAVTMFLDGGG. The segment at 56–77 is disordered; sequence AEEPSTSSASVSTVRPHTEEEV. Polar residues predominate over residues 59–70; that stretch reads PSTSSASVSTVR. A Glycyl lysine isopeptide (Lys-Gly) (interchain with G-Cter in SUMO2) cross-link involves residue lysine 84. A Glycyl lysine isopeptide (Lys-Gly) (interchain with G-Cter in ubiquitin) cross-link involves residue lysine 99. A Glycyl lysine isopeptide (Lys-Gly) (interchain with G-Cter in SUMO2) cross-link involves residue lysine 134. 4 positions are modified to phosphoserine: serine 278, serine 280, serine 285, and serine 288. The region spanning 285 to 304 is the UIM domain; the sequence is SEDSQLEAAIRASLQETHFD. Positions 300-309 are enriched in polar residues; the sequence is ETHFDSTQTK. The disordered stretch occupies residues 300-384; it reads ETHFDSTQTK…PGTATNHQGL (85 aa). Threonine 306 is subject to Phosphothreonine. Residues 352-366 are compositionally biased toward basic and acidic residues; sequence HKDLGHRKEENRRPL. Positions 408–485 constitute a UBX domain; the sequence is VNGPKAQLML…GLCPQETVFV (78 aa).

In terms of assembly, interacts with neddylated CUL2, ubiquitinated HIF1A, and VCP/p97.

It is found in the nucleus. Its function is as follows. Ubiquitin-binding adapter that links a subset of NEDD8-associated cullin ring ligases (CRLs) to the segregase VCP/p97, to regulate turnover of their ubiquitination substrates. This is UBX domain-containing protein 7 (UBXN7) from Homo sapiens (Human).